The following is a 468-amino-acid chain: Argininosuccinate lyase (468 aa).

Belongs to the lyase 1 family. Argininosuccinate lyase subfamily.

It is found in the cytoplasm. It catalyses the reaction 2-(N(omega)-L-arginino)succinate = fumarate + L-arginine. Its pathway is amino-acid biosynthesis; L-arginine biosynthesis; L-arginine from L-ornithine and carbamoyl phosphate: step 3/3. The chain is Argininosuccinate lyase from Sphingopyxis alaskensis (strain DSM 13593 / LMG 18877 / RB2256) (Sphingomonas alaskensis).